A 1304-amino-acid chain; its full sequence is Histone-lysine N-methyltransferase met-2 (1304 aa).

Residues 1–16 are compositionally biased toward polar residues; sequence MDQQEPSNNVDTSSIL. The segment at 1-31 is disordered; it reads MDQQEPSNNVDTSSILSDDGMETQEQSSFVT. Residues 97 to 129 are a coiled coil; that stretch reads NESEQEAVAAQRRVDAEKTAKDEAELKQQEEAE. An MBD domain is found at 834–909; it reads FHRNSPIHTP…FSFDARIDTA (76 aa). One can recognise a Pre-SET domain in the interval 971–1049; the sequence is SGCSCDGDCS…SCYNRVVQNN (79 aa). Zn(2+)-binding residues include cysteine 973, cysteine 975, cysteine 979, cysteine 985, cysteine 987, cysteine 1030, cysteine 1034, cysteine 1036, and cysteine 1041. The 226-residue stretch at 1052–1277 folds into the SET domain; it reads YPMHIFKTAQ…AGDELTWDYQ (226 aa). Residues 1062–1064, aspartate 1098, and tyrosine 1100 each bind S-adenosyl-L-methionine; that span reads SGW. The segment covering 1113-1122 has biased composition (basic and acidic residues); the sequence is EKGREDHETD. The tract at residues 1113-1201 is disordered; sequence EKGREDHETD…DSMEKDNIES (89 aa). Over residues 1128-1144 the composition is skewed to acidic residues; that stretch reads DESDYDDEEGSDGDSGD. The span at 1152–1165 shows a compositional bias: basic and acidic residues; the sequence is KRQDSSESGEETKR. The segment covering 1166–1178 has biased composition (basic residues); it reads LTRQKRKQSKKSG. Over residues 1182-1201 the composition is skewed to basic and acidic residues; it reads SVEKDDTTPRDSMEKDNIES. S-adenosyl-L-methionine contacts are provided by residues arginine 1231 and 1234-1235; that span reads NH. 4 residues coordinate Zn(2+): cysteine 1237, cysteine 1290, cysteine 1292, and cysteine 1297. The Post-SET domain occupies 1286–1302; the sequence is TQLTCHCGAENCTGRLL.

This sequence belongs to the class V-like SAM-binding methyltransferase superfamily.

It localises to the nucleus. The protein resides in the chromosome. It is found in the cytoplasm. The enzyme catalyses N(6)-methyl-L-lysyl(9)-[histone H3] + S-adenosyl-L-methionine = N(6),N(6)-dimethyl-L-lysyl(9)-[histone H3] + S-adenosyl-L-homocysteine + H(+). It carries out the reaction L-lysyl(9)-[histone H3] + S-adenosyl-L-methionine = N(6)-methyl-L-lysyl(9)-[histone H3] + S-adenosyl-L-homocysteine + H(+). Functionally, histone methyltransferase which is required for the mono- and dimethylation of 'Lys-9' of histone H3. This increases the efficiency of set-25-mediated trimethylation of histone H3 'Lys-9'. Involved in the transcriptional repression of lin-3 which is required for the negative regulation of vulval cell fate specification during postembryonic development. Has a role in blocking checkpoint signaling and mediating the transcriptional silencing of meiotic sex chromosome inactivation; a mechanism which enables checkpoint proteins to distinguish between the partnerless male X chromosome and asynapsed chromosomes thereby shielding the lone X from inappropriate activation of an apoptotic program. Operates redundantly with set-25 to position chromatin at the nuclear periphery. Required for small-RNA-induced H3K9 methylation. Together with set-25, protects and stabilizes repeat-rich genomic regions by suppressing transcription-induced replication stress through methylation of H3K9. Together with spr-5, required for transgenerational fertility. This Caenorhabditis elegans protein is Histone-lysine N-methyltransferase met-2 (met-2).